Reading from the N-terminus, the 303-residue chain is UDP-3-O-acyl-N-acetylglucosamine deacetylase (303 aa).

Residues H78, H237, and D241 each coordinate Zn(2+). The active-site Proton donor is the H264.

The protein belongs to the LpxC family. It depends on Zn(2+) as a cofactor.

It catalyses the reaction a UDP-3-O-[(3R)-3-hydroxyacyl]-N-acetyl-alpha-D-glucosamine + H2O = a UDP-3-O-[(3R)-3-hydroxyacyl]-alpha-D-glucosamine + acetate. The protein operates within glycolipid biosynthesis; lipid IV(A) biosynthesis; lipid IV(A) from (3R)-3-hydroxytetradecanoyl-[acyl-carrier-protein] and UDP-N-acetyl-alpha-D-glucosamine: step 2/6. In terms of biological role, catalyzes the hydrolysis of UDP-3-O-myristoyl-N-acetylglucosamine to form UDP-3-O-myristoylglucosamine and acetate, the committed step in lipid A biosynthesis. This Pseudomonas savastanoi pv. phaseolicola (strain 1448A / Race 6) (Pseudomonas syringae pv. phaseolicola (strain 1448A / Race 6)) protein is UDP-3-O-acyl-N-acetylglucosamine deacetylase.